A 173-amino-acid polypeptide reads, in one-letter code: Crossover junction endodeoxyribonuclease RuvC (173 aa).

Active-site residues include aspartate 8, glutamate 67, and aspartate 139. The Mg(2+) site is built by aspartate 8, glutamate 67, and aspartate 139.

The protein belongs to the RuvC family. Homodimer which binds Holliday junction (HJ) DNA. The HJ becomes 2-fold symmetrical on binding to RuvC with unstacked arms; it has a different conformation from HJ DNA in complex with RuvA. In the full resolvosome a probable DNA-RuvA(4)-RuvB(12)-RuvC(2) complex forms which resolves the HJ. It depends on Mg(2+) as a cofactor.

Its subcellular location is the cytoplasm. It carries out the reaction Endonucleolytic cleavage at a junction such as a reciprocal single-stranded crossover between two homologous DNA duplexes (Holliday junction).. In terms of biological role, the RuvA-RuvB-RuvC complex processes Holliday junction (HJ) DNA during genetic recombination and DNA repair. Endonuclease that resolves HJ intermediates. Cleaves cruciform DNA by making single-stranded nicks across the HJ at symmetrical positions within the homologous arms, yielding a 5'-phosphate and a 3'-hydroxyl group; requires a central core of homology in the junction. The consensus cleavage sequence is 5'-(A/T)TT(C/G)-3'. Cleavage occurs on the 3'-side of the TT dinucleotide at the point of strand exchange. HJ branch migration catalyzed by RuvA-RuvB allows RuvC to scan DNA until it finds its consensus sequence, where it cleaves and resolves the cruciform DNA. This is Crossover junction endodeoxyribonuclease RuvC from Edwardsiella ictaluri (strain 93-146).